A 248-amino-acid polypeptide reads, in one-letter code: PACRG-like protein (248 aa).

An N-acetylmethionine modification is found at M1. Residues 1 to 72 (MQRSECSGGV…NPKTINPFGE (72 aa)) are disordered. 2 stretches are compositionally biased toward polar residues: residues 14–29 (NRATGSNDQRTSSSTQ) and 36–45 (VQRSKSSSLT). S47 carries the phosphoserine modification.

The sequence is that of PACRG-like protein (Pacrgl) from Mus musculus (Mouse).